The chain runs to 306 residues: Ankyrin repeat domain-containing protein 23 (306 aa).

Residues 41–90 (QEAVAREKLKLEEEKRKKLERFNSSRLTLDNLTDLENLVQRRRKKRQRHK) adopt a coiled-coil conformation. Positions 78–107 (LVQRRRKKRQRHKVPPREPESGAEPQPQVP) are disordered. Positions 80 to 91 (QRRRKKRQRHKV) are enriched in basic residues. ANK repeat units lie at residues 144-173 (LHRT…AIEV), 177-206 (LDRT…QVNA), 210-239 (IWST…HINA), and 243-272 (EGDT…KLGV). Residues 179-196 (RTPVFWACRGGHLDILKR) are interaction with TTN.

Interacts with titin/TTN and MYPN.

Its subcellular location is the nucleus. Functionally, may be involved in the energy metabolism. Could be a molecular link between myofibrillar stretch-induced signaling pathways and muscle gene expression. The chain is Ankyrin repeat domain-containing protein 23 (Ankrd23) from Mus musculus (Mouse).